A 374-amino-acid chain; its full sequence is Tryptophan--tRNA ligase (374 aa).

Residues 71-79 carry the 'HIGH' region motif; that stretch reads PSGRMHLGH. A 'KMSKS' region motif is present at residues 247 to 251; the sequence is KMSSS.

The protein belongs to the class-I aminoacyl-tRNA synthetase family.

It is found in the cytoplasm. The enzyme catalyses tRNA(Trp) + L-tryptophan + ATP = L-tryptophyl-tRNA(Trp) + AMP + diphosphate + H(+). The polypeptide is Tryptophan--tRNA ligase (Methanopyrus kandleri (strain AV19 / DSM 6324 / JCM 9639 / NBRC 100938)).